We begin with the raw amino-acid sequence, 112 residues long: Nucleoid-associated protein FTW_0607 (112 aa).

The interval 1–27 is disordered; sequence MNFDMSKLMQQAQKMQEQMKKAQQERE. Residues 17–27 are compositionally biased toward basic and acidic residues; sequence EQMKKAQQERE.

Belongs to the YbaB/EbfC family. As to quaternary structure, homodimer.

The protein resides in the cytoplasm. The protein localises to the nucleoid. Its function is as follows. Binds to DNA and alters its conformation. May be involved in regulation of gene expression, nucleoid organization and DNA protection. In Francisella tularensis subsp. tularensis (strain WY96-3418), this protein is Nucleoid-associated protein FTW_0607.